A 639-amino-acid polypeptide reads, in one-letter code: Coiled-coil domain-containing protein 93 homolog (639 aa).

The disordered stretch occupies residues 250–275; that stretch reads KLESQLSGKDGSGKDTTEAEREEEEK. Positions 260 to 275 are enriched in basic and acidic residues; that stretch reads GSGKDTTEAEREEEEK. Residues 332–492 are a coiled coil; sequence AEKLHRQKIT…KNRDISLIQR (161 aa).

It belongs to the CCDC93 family.

This chain is Coiled-coil domain-containing protein 93 homolog, found in Dictyostelium discoideum (Social amoeba).